We begin with the raw amino-acid sequence, 371 residues long: 4-hydroxy-3-methylbut-2-en-1-yl diphosphate synthase (flavodoxin) (371 aa).

Cys-270, Cys-273, Cys-305, and Glu-312 together coordinate [4Fe-4S] cluster.

The protein belongs to the IspG family. Requires [4Fe-4S] cluster as cofactor.

It carries out the reaction (2E)-4-hydroxy-3-methylbut-2-enyl diphosphate + oxidized [flavodoxin] + H2O + 2 H(+) = 2-C-methyl-D-erythritol 2,4-cyclic diphosphate + reduced [flavodoxin]. It participates in isoprenoid biosynthesis; isopentenyl diphosphate biosynthesis via DXP pathway; isopentenyl diphosphate from 1-deoxy-D-xylulose 5-phosphate: step 5/6. Its function is as follows. Converts 2C-methyl-D-erythritol 2,4-cyclodiphosphate (ME-2,4cPP) into 1-hydroxy-2-methyl-2-(E)-butenyl 4-diphosphate. This Chromohalobacter salexigens (strain ATCC BAA-138 / DSM 3043 / CIP 106854 / NCIMB 13768 / 1H11) protein is 4-hydroxy-3-methylbut-2-en-1-yl diphosphate synthase (flavodoxin).